Consider the following 235-residue polypeptide: High affinity immunoglobulin epsilon receptor subunit beta (235 aa).

Positions 1-23 are disordered; sequence MDTENRSRADLALPNPQESSSAP. The Cytoplasmic portion of the chain corresponds to 1–51; that stretch reads MDTENRSRADLALPNPQESSSAPDIELLEASPAKAAPPKQTWRTFLKKELE. A helical membrane pass occupies residues 52–71; sequence FLGATQILVGLICLCFGTIV. Residues 72–89 are Extracellular-facing; sequence CSVLYVSDFDEEVLLLYK. Residues 90–109 form a helical membrane-spanning segment; sequence LGYPFWGAVLFVLSGFLSII. Residues 110–122 lie on the Cytoplasmic side of the membrane; sequence SERKNTLYLVRGS. A helical membrane pass occupies residues 123–142; it reads LGANIVSSIAAGTGIAMLIL. Residues 143–171 are Extracellular-facing; sequence NLTNNFAYMNNCKNVTEDDGCFVASFTTE. Residues 172–191 form a helical membrane-spanning segment; it reads LVLMMLFLTILAFCSAVLFT. Topologically, residues 192–235 are cytoplasmic; that stretch reads IYRIGQELESKKVPDDRLYEELNVYSPIYSELEDKGETSSPVDS. A phosphotyrosine mark is found at Tyr-210 and Tyr-216. Ser-217 is modified (phosphoserine). Residue Tyr-220 is modified to Phosphotyrosine.

The protein belongs to the MS4A family. In terms of assembly, tetramer of an alpha chain, a beta chain, and two disulfide linked gamma chains. Binds LILRB1. Interacts with FGR. Interacts with FGR and FES/FPS. Interacts with LYN. Phosphorylated on tyrosine residues by LYN.

The protein localises to the membrane. High affinity receptor that binds to the Fc region of immunoglobulins epsilon. Aggregation of FCER1 by multivalent antigens is required for the full mast cell response, including the release of preformed mediators (such as histamine) by degranulation and de novo production of lipid mediators and cytokines. Also mediates the secretion of important lymphokines. Binding of allergen to receptor-bound IgE leads to cell activation and the release of mediators responsible for the manifestations of allergy. The protein is High affinity immunoglobulin epsilon receptor subunit beta (Ms4a2) of Mus musculus (Mouse).